The chain runs to 446 residues: tRNA-2-methylthio-N(6)-dimethylallyladenosine synthase (446 aa).

The MTTase N-terminal domain maps to 3 to 119; that stretch reads KKIFIKTFGC…INEAILNHLK (117 aa). The [4Fe-4S] cluster site is built by Cys-12, Cys-48, Cys-82, Cys-158, Cys-162, and Cys-165. The region spanning 144–374 is the Radical SAM core domain; sequence KDSKVSSFLT…QEKLFNNQIK (231 aa). The TRAM domain occupies 377–439; sequence KSLENKILNV…QNSLFGKLTE (63 aa).

This sequence belongs to the methylthiotransferase family. MiaB subfamily. In terms of assembly, monomer. [4Fe-4S] cluster is required as a cofactor.

The protein localises to the cytoplasm. The enzyme catalyses N(6)-dimethylallyladenosine(37) in tRNA + (sulfur carrier)-SH + AH2 + 2 S-adenosyl-L-methionine = 2-methylsulfanyl-N(6)-dimethylallyladenosine(37) in tRNA + (sulfur carrier)-H + 5'-deoxyadenosine + L-methionine + A + S-adenosyl-L-homocysteine + 2 H(+). Its function is as follows. Catalyzes the methylthiolation of N6-(dimethylallyl)adenosine (i(6)A), leading to the formation of 2-methylthio-N6-(dimethylallyl)adenosine (ms(2)i(6)A) at position 37 in tRNAs that read codons beginning with uridine. This Pelagibacter ubique (strain HTCC1062) protein is tRNA-2-methylthio-N(6)-dimethylallyladenosine synthase.